A 274-amino-acid chain; its full sequence is Dermonecrotic toxin SdSicTox-betaIIB2ii (274 aa).

Residue His-5 is part of the active site. Mg(2+) is bound by residues Glu-25 and Asp-27. The active-site Nucleophile is His-41. 2 cysteine pairs are disulfide-bonded: Cys-45/Cys-51 and Cys-47/Cys-190. Asp-85 is a Mg(2+) binding site.

It belongs to the arthropod phospholipase D family. Class II subfamily. The cofactor is Mg(2+). In terms of tissue distribution, expressed by the venom gland.

It is found in the secreted. It catalyses the reaction an N-(acyl)-sphingosylphosphocholine = an N-(acyl)-sphingosyl-1,3-cyclic phosphate + choline. The enzyme catalyses an N-(acyl)-sphingosylphosphoethanolamine = an N-(acyl)-sphingosyl-1,3-cyclic phosphate + ethanolamine. The catalysed reaction is a 1-acyl-sn-glycero-3-phosphocholine = a 1-acyl-sn-glycero-2,3-cyclic phosphate + choline. It carries out the reaction a 1-acyl-sn-glycero-3-phosphoethanolamine = a 1-acyl-sn-glycero-2,3-cyclic phosphate + ethanolamine. Functionally, dermonecrotic toxins cleave the phosphodiester linkage between the phosphate and headgroup of certain phospholipids (sphingolipid and lysolipid substrates), forming an alcohol (often choline) and a cyclic phosphate. This toxin acts on sphingomyelin (SM). It may also act on ceramide phosphoethanolamine (CPE), lysophosphatidylcholine (LPC) and lysophosphatidylethanolamine (LPE), but not on lysophosphatidylserine (LPS), and lysophosphatidylglycerol (LPG). It acts by transphosphatidylation, releasing exclusively cyclic phosphate products as second products. Induces dermonecrosis, hemolysis, increased vascular permeability, edema, inflammatory response, and platelet aggregation. This Sicarius cf. damarensis (strain GJB-2008) (Six-eyed sand spider) protein is Dermonecrotic toxin SdSicTox-betaIIB2ii.